The sequence spans 515 residues: ATP synthase subunit alpha (515 aa).

171–178 provides a ligand contact to ATP; the sequence is GDRQTGKT.

This sequence belongs to the ATPase alpha/beta chains family. As to quaternary structure, F-type ATPases have 2 components, CF(1) - the catalytic core - and CF(0) - the membrane proton channel. CF(1) has five subunits: alpha(3), beta(3), gamma(1), delta(1), epsilon(1). CF(0) has three main subunits: a(1), b(2) and c(9-12). The alpha and beta chains form an alternating ring which encloses part of the gamma chain. CF(1) is attached to CF(0) by a central stalk formed by the gamma and epsilon chains, while a peripheral stalk is formed by the delta and b chains.

It is found in the cell inner membrane. The catalysed reaction is ATP + H2O + 4 H(+)(in) = ADP + phosphate + 5 H(+)(out). Its function is as follows. Produces ATP from ADP in the presence of a proton gradient across the membrane. The alpha chain is a regulatory subunit. The chain is ATP synthase subunit alpha from Xylella fastidiosa (strain 9a5c).